The primary structure comprises 206 residues: ATP-dependent Clp protease proteolytic subunit 1 (206 aa).

S103 serves as the catalytic Nucleophile. Residue H128 is part of the active site.

This sequence belongs to the peptidase S14 family. In terms of assembly, fourteen ClpP subunits assemble into 2 heptameric rings which stack back to back to give a disk-like structure with a central cavity, resembling the structure of eukaryotic proteasomes.

It is found in the cytoplasm. The enzyme catalyses Hydrolysis of proteins to small peptides in the presence of ATP and magnesium. alpha-casein is the usual test substrate. In the absence of ATP, only oligopeptides shorter than five residues are hydrolyzed (such as succinyl-Leu-Tyr-|-NHMec, and Leu-Tyr-Leu-|-Tyr-Trp, in which cleavage of the -Tyr-|-Leu- and -Tyr-|-Trp bonds also occurs).. In terms of biological role, cleaves peptides in various proteins in a process that requires ATP hydrolysis. Has a chymotrypsin-like activity. Plays a major role in the degradation of misfolded proteins. This Protochlamydia amoebophila (strain UWE25) protein is ATP-dependent Clp protease proteolytic subunit 1.